Consider the following 591-residue polypeptide: L-fucose isomerase (591 aa).

Residues Glu337 and Asp361 each act as proton acceptor in the active site. Mn(2+) is bound by residues Glu337, Asp361, and His528.

Belongs to the L-fucose isomerase family. As to quaternary structure, homohexamer. Requires Mn(2+) as cofactor.

The protein localises to the cytoplasm. The enzyme catalyses L-fucose = L-fuculose. It functions in the pathway carbohydrate degradation; L-fucose degradation; L-lactaldehyde and glycerone phosphate from L-fucose: step 1/3. Its function is as follows. Converts the aldose L-fucose into the corresponding ketose L-fuculose. The chain is L-fucose isomerase from Salmonella arizonae (strain ATCC BAA-731 / CDC346-86 / RSK2980).